A 142-amino-acid polypeptide reads, in one-letter code: ATP synthase epsilon chain (142 aa).

Belongs to the ATPase epsilon chain family. As to quaternary structure, F-type ATPases have 2 components, CF(1) - the catalytic core - and CF(0) - the membrane proton channel. CF(1) has five subunits: alpha(3), beta(3), gamma(1), delta(1), epsilon(1). CF(0) has three main subunits: a, b and c.

It localises to the cell inner membrane. Functionally, produces ATP from ADP in the presence of a proton gradient across the membrane. The sequence is that of ATP synthase epsilon chain from Shewanella sediminis (strain HAW-EB3).